A 425-amino-acid chain; its full sequence is NAD kinase 2, mitochondrial (425 aa).

The N-terminal 45 residues, Met-1–Ala-45, are a transit peptide targeting the mitochondrion. The disordered stretch occupies residues Gln-20–Asp-46. At Lys-59 the chain carries N6-acetyllysine; alternate. Position 59 is an N6-succinyllysine; alternate (Lys-59). Residue Ser-171 is modified to Phosphoserine. Residue Lys-285 is modified to N6-succinyllysine. Lys-300 bears the N6-acetyllysine; alternate mark. At Lys-300 the chain carries N6-succinyllysine; alternate. Residue Ser-350 is modified to Phosphoserine. The residue at position 380 (Lys-380) is an N6-acetyllysine.

The protein belongs to the NAD kinase family. As to quaternary structure, homodimer.

It is found in the mitochondrion. The enzyme catalyses NAD(+) + ATP = ADP + NADP(+) + H(+). Inhibited by NADH, NADPH and NADP(+). Its function is as follows. Mitochondrial NAD(+) kinase that phosphorylates NAD(+) to yield NADP(+). Can use both ATP or inorganic polyphosphate as the phosphoryl donor. This chain is NAD kinase 2, mitochondrial (Nadk2), found in Rattus norvegicus (Rat).